A 126-amino-acid chain; its full sequence is MSSIETLVEEIGKLTLTEASELVKALEEKFGVSAAPAVMAGAVMAAPAGEAAAAEEKTEFDVVLKSAGANKINVIKVVRAITGLGLKEAKDMVDGAPKTVKEAVSKDEAEKIAKELKDAGAEVELN.

Belongs to the bacterial ribosomal protein bL12 family. In terms of assembly, homodimer. Part of the ribosomal stalk of the 50S ribosomal subunit. Forms a multimeric L10(L12)X complex, where L10 forms an elongated spine to which 2 to 4 L12 dimers bind in a sequential fashion. Binds GTP-bound translation factors.

Its function is as follows. Forms part of the ribosomal stalk which helps the ribosome interact with GTP-bound translation factors. Is thus essential for accurate translation. The sequence is that of Large ribosomal subunit protein bL12 from Chlorobaculum tepidum (strain ATCC 49652 / DSM 12025 / NBRC 103806 / TLS) (Chlorobium tepidum).